A 183-amino-acid polypeptide reads, in one-letter code: ATP synthase subunit b, chloroplastic (183 aa).

Residues 28–48 (DIFEANVINILLLLFGLIYVL) form a helical membrane-spanning segment.

It belongs to the ATPase B chain family. F-type ATPases have 2 components, F(1) - the catalytic core - and F(0) - the membrane proton channel. F(1) has five subunits: alpha(3), beta(3), gamma(1), delta(1), epsilon(1). F(0) has four main subunits: a(1), b(1), b'(1) and c(10-14). The alpha and beta chains form an alternating ring which encloses part of the gamma chain. F(1) is attached to F(0) by a central stalk formed by the gamma and epsilon chains, while a peripheral stalk is formed by the delta, b and b' chains.

The protein resides in the plastid. It localises to the chloroplast thylakoid membrane. Functionally, f(1)F(0) ATP synthase produces ATP from ADP in the presence of a proton or sodium gradient. F-type ATPases consist of two structural domains, F(1) containing the extramembraneous catalytic core and F(0) containing the membrane proton channel, linked together by a central stalk and a peripheral stalk. During catalysis, ATP synthesis in the catalytic domain of F(1) is coupled via a rotary mechanism of the central stalk subunits to proton translocation. In terms of biological role, component of the F(0) channel, it forms part of the peripheral stalk, linking F(1) to F(0). The protein is ATP synthase subunit b, chloroplastic of Pyropia yezoensis (Susabi-nori).